A 173-amino-acid polypeptide reads, in one-letter code: Shikimate kinase 1 (173 aa).

14-19 (GAGKST) is a binding site for ATP. S18 serves as a coordination point for Mg(2+). Residues D36, R60, and G82 each contribute to the substrate site. R120 is an ATP binding site. R140 provides a ligand contact to substrate. ATP is bound at residue Q157.

This sequence belongs to the shikimate kinase family. In terms of assembly, monomer. It depends on Mg(2+) as a cofactor.

The protein resides in the cytoplasm. It carries out the reaction shikimate + ATP = 3-phosphoshikimate + ADP + H(+). It participates in metabolic intermediate biosynthesis; chorismate biosynthesis; chorismate from D-erythrose 4-phosphate and phosphoenolpyruvate: step 5/7. Its function is as follows. Catalyzes the specific phosphorylation of the 3-hydroxyl group of shikimic acid using ATP as a cosubstrate. This Shigella boydii serotype 18 (strain CDC 3083-94 / BS512) protein is Shikimate kinase 1.